Reading from the N-terminus, the 142-residue chain is Holo-[acyl-carrier-protein] synthase (142 aa).

Positions 9 and 63 each coordinate Mg(2+).

It belongs to the P-Pant transferase superfamily. AcpS family. It depends on Mg(2+) as a cofactor.

Its subcellular location is the cytoplasm. The catalysed reaction is apo-[ACP] + CoA = holo-[ACP] + adenosine 3',5'-bisphosphate + H(+). Functionally, transfers the 4'-phosphopantetheine moiety from coenzyme A to a Ser of acyl-carrier-protein. This is Holo-[acyl-carrier-protein] synthase from Burkholderia lata (strain ATCC 17760 / DSM 23089 / LMG 22485 / NCIMB 9086 / R18194 / 383).